The primary structure comprises 303 residues: tRNA pseudouridine synthase A (303 aa).

Asp-59 acts as the Nucleophile in catalysis. A substrate-binding site is contributed by Tyr-128.

The protein belongs to the tRNA pseudouridine synthase TruA family. As to quaternary structure, homodimer.

It carries out the reaction uridine(38/39/40) in tRNA = pseudouridine(38/39/40) in tRNA. Formation of pseudouridine at positions 38, 39 and 40 in the anticodon stem and loop of transfer RNAs. In Bifidobacterium longum (strain DJO10A), this protein is tRNA pseudouridine synthase A.